Reading from the N-terminus, the 262-residue chain is Indole-3-glycerol phosphate synthase (262 aa).

Belongs to the TrpC family.

It carries out the reaction 1-(2-carboxyphenylamino)-1-deoxy-D-ribulose 5-phosphate + H(+) = (1S,2R)-1-C-(indol-3-yl)glycerol 3-phosphate + CO2 + H2O. Its pathway is amino-acid biosynthesis; L-tryptophan biosynthesis; L-tryptophan from chorismate: step 4/5. The chain is Indole-3-glycerol phosphate synthase from Leptothrix cholodnii (strain ATCC 51168 / LMG 8142 / SP-6) (Leptothrix discophora (strain SP-6)).